Consider the following 420-residue polypeptide: Glucose-1-phosphate adenylyltransferase (420 aa).

Alpha-D-glucose 1-phosphate contacts are provided by residues tyrosine 107, glycine 172, 187–188 (EK), and serine 205.

Belongs to the bacterial/plant glucose-1-phosphate adenylyltransferase family. As to quaternary structure, homotetramer.

It carries out the reaction alpha-D-glucose 1-phosphate + ATP + H(+) = ADP-alpha-D-glucose + diphosphate. Its pathway is glycan biosynthesis; glycogen biosynthesis. Involved in the biosynthesis of ADP-glucose, a building block required for the elongation reactions to produce glycogen. Catalyzes the reaction between ATP and alpha-D-glucose 1-phosphate (G1P) to produce pyrophosphate and ADP-Glc. This Rhodopseudomonas palustris (strain BisB18) protein is Glucose-1-phosphate adenylyltransferase.